Reading from the N-terminus, the 823-residue chain is Lon protease (823 aa).

The Lon N-terminal domain maps to 51-246 (IPILPLRNMV…RLLFILNREY (196 aa)). 397–404 (GPPGVGKT) contributes to the ATP binding site. One can recognise a Lon proteolytic domain in the interval 633–815 (NDYAGVVTGL…QQVVDLALLR (183 aa)). Active-site residues include serine 721 and lysine 764.

Belongs to the peptidase S16 family. Homohexamer. Organized in a ring with a central cavity.

The protein resides in the cytoplasm. It carries out the reaction Hydrolysis of proteins in presence of ATP.. Functionally, ATP-dependent serine protease that mediates the selective degradation of mutant and abnormal proteins as well as certain short-lived regulatory proteins. Required for cellular homeostasis and for survival from DNA damage and developmental changes induced by stress. Degrades polypeptides processively to yield small peptide fragments that are 5 to 10 amino acids long. Binds to DNA in a double-stranded, site-specific manner. This chain is Lon protease, found in Parabacteroides distasonis (strain ATCC 8503 / DSM 20701 / CIP 104284 / JCM 5825 / NCTC 11152).